Here is a 444-residue protein sequence, read N- to C-terminus: Spermidine/putrescine import ATP-binding protein PotA (444 aa).

In terms of domain architecture, ABC transporter spans 11–332 (ISLVDVDKEF…PVNKWVANFI (322 aa)). 43-50 (GPSGSGKT) is an ATP binding site. The segment at 111–201 (RIKKKAEEIP…ESFKKKYLTR (91 aa)) is insert.

Belongs to the ABC transporter superfamily. Spermidine/putrescine importer (TC 3.A.1.11.1) family. In terms of assembly, the complex is composed of two ATP-binding proteins (PotA), two transmembrane proteins (PotB and PotC) and a solute-binding protein (PotD).

Its subcellular location is the cell membrane. It catalyses the reaction ATP + H2O + polyamine-[polyamine-binding protein]Side 1 = ADP + phosphate + polyamineSide 2 + [polyamine-binding protein]Side 1.. Its function is as follows. Part of the ABC transporter complex PotABCD involved in spermidine/putrescine import. Responsible for energy coupling to the transport system. This is Spermidine/putrescine import ATP-binding protein PotA from Mesomycoplasma hyopneumoniae (strain 232) (Mycoplasma hyopneumoniae).